The chain runs to 299 residues: uncharacterized protein (299 aa).

Belongs to the glycosyltransferase 2 family.

This is an uncharacterized protein from Mycoplasma pneumoniae (strain ATCC 29342 / M129 / Subtype 1) (Mycoplasmoides pneumoniae).